Consider the following 110-residue polypeptide: MAAKFHLKKAKDGQFHFNLHAANGEIILTSELYKAKDSALGGIESVRKNSQRDGAFEVKPANNGKFHFVLKATNGQVVGQSQLYASQANAEAGVQSVKRATPEAGLSDES.

A run of 2 repeats spans residues 10 to 58 (AKDG…AFEV) and 61 to 109 (ANNG…LSDE). A disordered region spans residues 91–110 (EAGVQSVKRATPEAGLSDES).

Belongs to the UPF0339 family. Duplicated subfamily.

The chain is UPF0339 protein PA0329 from Pseudomonas aeruginosa (strain ATCC 15692 / DSM 22644 / CIP 104116 / JCM 14847 / LMG 12228 / 1C / PRS 101 / PAO1).